The following is a 55-amino-acid chain: Large ribosomal subunit protein bL33 (55 aa).

It belongs to the bacterial ribosomal protein bL33 family.

The chain is Large ribosomal subunit protein bL33 from Azorhizobium caulinodans (strain ATCC 43989 / DSM 5975 / JCM 20966 / LMG 6465 / NBRC 14845 / NCIMB 13405 / ORS 571).